The primary structure comprises 400 residues: Subtilisin-like protease 7 (400 aa).

Positions 1 to 20 are cleaved as a signal peptide; it reads MGFITKAIPLALAAASVING. A propeptide spanning residues 21 to 119 is cleaved from the precursor; the sequence is AEILETRAGV…IERDARVQIN (99 aa). In terms of domain architecture, Inhibitor I9 spans 36-118; it reads KYIVVMNDGM…YIERDARVQI (83 aa). The Peptidase S8 domain occupies 129–400; that stretch reads SWGLARVGSK…GKLINNGSGK (272 aa). Active-site charge relay system residues include aspartate 161 and histidine 192. An N-linked (GlcNAc...) asparagine glycan is attached at asparagine 252. Serine 346 functions as the Charge relay system in the catalytic mechanism. N-linked (GlcNAc...) asparagine glycosylation is present at asparagine 396.

Belongs to the peptidase S8 family.

The protein resides in the secreted. Secreted subtilisin-like serine protease with keratinolytic activity that contributes to pathogenicity. This is Subtilisin-like protease 7 (SUB7) from Arthroderma gypseum (strain ATCC MYA-4604 / CBS 118893) (Microsporum gypseum).